A 340-amino-acid chain; its full sequence is Lipoyl synthase (340 aa).

[4Fe-4S] cluster contacts are provided by Cys83, Cys88, Cys94, Cys109, Cys113, Cys116, and Ser323. In terms of domain architecture, Radical SAM core spans 95–312 (FSGGTATFMI…AEEGYKMGFK (218 aa)).

It belongs to the radical SAM superfamily. Lipoyl synthase family. Requires [4Fe-4S] cluster as cofactor.

It localises to the cytoplasm. It carries out the reaction [[Fe-S] cluster scaffold protein carrying a second [4Fe-4S](2+) cluster] + N(6)-octanoyl-L-lysyl-[protein] + 2 oxidized [2Fe-2S]-[ferredoxin] + 2 S-adenosyl-L-methionine + 4 H(+) = [[Fe-S] cluster scaffold protein] + N(6)-[(R)-dihydrolipoyl]-L-lysyl-[protein] + 4 Fe(3+) + 2 hydrogen sulfide + 2 5'-deoxyadenosine + 2 L-methionine + 2 reduced [2Fe-2S]-[ferredoxin]. It participates in protein modification; protein lipoylation via endogenous pathway; protein N(6)-(lipoyl)lysine from octanoyl-[acyl-carrier-protein]: step 2/2. Its function is as follows. Catalyzes the radical-mediated insertion of two sulfur atoms into the C-6 and C-8 positions of the octanoyl moiety bound to the lipoyl domains of lipoate-dependent enzymes, thereby converting the octanoylated domains into lipoylated derivatives. The polypeptide is Lipoyl synthase (Pseudomonas fluorescens (strain Pf0-1)).